A 216-amino-acid chain; its full sequence is Imidazole glycerol phosphate synthase subunit HisH (216 aa).

The Glutamine amidotransferase type-1 domain occupies 2-216 (SVAIVDYGSG…LISNFLKWKP (215 aa)). Cys-88 (nucleophile) is an active-site residue. Residues His-196 and Glu-198 contribute to the active site.

Heterodimer of HisH and HisF.

It localises to the cytoplasm. The enzyme catalyses 5-[(5-phospho-1-deoxy-D-ribulos-1-ylimino)methylamino]-1-(5-phospho-beta-D-ribosyl)imidazole-4-carboxamide + L-glutamine = D-erythro-1-(imidazol-4-yl)glycerol 3-phosphate + 5-amino-1-(5-phospho-beta-D-ribosyl)imidazole-4-carboxamide + L-glutamate + H(+). It carries out the reaction L-glutamine + H2O = L-glutamate + NH4(+). It functions in the pathway amino-acid biosynthesis; L-histidine biosynthesis; L-histidine from 5-phospho-alpha-D-ribose 1-diphosphate: step 5/9. Its function is as follows. IGPS catalyzes the conversion of PRFAR and glutamine to IGP, AICAR and glutamate. The HisH subunit catalyzes the hydrolysis of glutamine to glutamate and ammonia as part of the synthesis of IGP and AICAR. The resulting ammonia molecule is channeled to the active site of HisF. This Rhodopseudomonas palustris (strain ATCC BAA-98 / CGA009) protein is Imidazole glycerol phosphate synthase subunit HisH.